A 202-amino-acid chain; its full sequence is LexA repressor (202 aa).

The segment at residues 29–49 is a DNA-binding region (H-T-H motif); the sequence is VREICEATGLKSTSTVHGHLT. Active-site for autocatalytic cleavage activity residues include Ser126 and Lys163.

The protein belongs to the peptidase S24 family. As to quaternary structure, homodimer.

It catalyses the reaction Hydrolysis of Ala-|-Gly bond in repressor LexA.. Represses a number of genes involved in the response to DNA damage (SOS response), including recA and lexA. In the presence of single-stranded DNA, RecA interacts with LexA causing an autocatalytic cleavage which disrupts the DNA-binding part of LexA, leading to derepression of the SOS regulon and eventually DNA repair. In Caldicellulosiruptor saccharolyticus (strain ATCC 43494 / DSM 8903 / Tp8T 6331), this protein is LexA repressor.